The primary structure comprises 682 residues: DNA-directed RNA polymerase subunit beta' (682 aa).

Residues Cys69, Cys71, Cys87, and Cys90 each coordinate Zn(2+). Mg(2+) is bound by residues Asp489, Asp491, and Asp493.

The protein belongs to the RNA polymerase beta' chain family. RpoC1 subfamily. In terms of assembly, in plastids the minimal PEP RNA polymerase catalytic core is composed of four subunits: alpha, beta, beta', and beta''. When a (nuclear-encoded) sigma factor is associated with the core the holoenzyme is formed, which can initiate transcription. Requires Mg(2+) as cofactor. Zn(2+) serves as cofactor.

It localises to the plastid. It is found in the chloroplast. It catalyses the reaction RNA(n) + a ribonucleoside 5'-triphosphate = RNA(n+1) + diphosphate. Its function is as follows. DNA-dependent RNA polymerase catalyzes the transcription of DNA into RNA using the four ribonucleoside triphosphates as substrates. This is DNA-directed RNA polymerase subunit beta' from Agrostis stolonifera (Creeping bentgrass).